A 258-amino-acid chain; its full sequence is Polysialic acid transport protein KpsM (258 aa).

The region spanning 30–251 is the ABC transmembrane type-2 domain; sequence LGYLWAILEP…FIGLALYRTR (222 aa). A run of 6 helical transmembrane segments spans residues 33 to 53, 61 to 81, 110 to 130, 144 to 164, 175 to 195, and 227 to 247; these read LWAI…FGYI, ISFP…SSIS, ALLE…IVWM, VLTW…FMVV, LPIL…LHSI, and GVSL…GLAL.

The protein belongs to the ABC-2 integral membrane protein family.

The protein localises to the cell inner membrane. Functionally, kpsM and KpsT constitute a system for the transport of polysialic acid across the cytoplasmic membrane. The polypeptide is Polysialic acid transport protein KpsM (kpsM) (Escherichia coli).